We begin with the raw amino-acid sequence, 157 residues long: SsrA-binding protein (157 aa).

The protein belongs to the SmpB family.

The protein resides in the cytoplasm. Its function is as follows. Required for rescue of stalled ribosomes mediated by trans-translation. Binds to transfer-messenger RNA (tmRNA), required for stable association of tmRNA with ribosomes. tmRNA and SmpB together mimic tRNA shape, replacing the anticodon stem-loop with SmpB. tmRNA is encoded by the ssrA gene; the 2 termini fold to resemble tRNA(Ala) and it encodes a 'tag peptide', a short internal open reading frame. During trans-translation Ala-aminoacylated tmRNA acts like a tRNA, entering the A-site of stalled ribosomes, displacing the stalled mRNA. The ribosome then switches to translate the ORF on the tmRNA; the nascent peptide is terminated with the 'tag peptide' encoded by the tmRNA and targeted for degradation. The ribosome is freed to recommence translation, which seems to be the essential function of trans-translation. The protein is SsrA-binding protein of Clostridium kluyveri (strain NBRC 12016).